We begin with the raw amino-acid sequence, 304 residues long: Uricase (304 aa).

Ala-2 carries the N-acetylalanine modification. N6-acetyllysine; alternate is present on residues Lys-10 and Lys-23. Residues Lys-10 and Lys-23 each carry the N6-succinyllysine; alternate modification. Catalysis depends on Lys-23, which acts as the Charge relay system. Residues Lys-27 and Lys-36 each carry the N6-acetyllysine modification. Residues Ser-39 and Ser-63 each carry the phosphoserine modification. Thr-68 serves as the catalytic Charge relay system. Urate-binding residues include Thr-68 and Asp-69. Lys-118, Lys-122, and Lys-164 each carry N6-acetyllysine. Phe-170 serves as a coordination point for urate. N6-acetyllysine occurs at positions 175 and 185. Arg-187 is a binding site for urate. 2 positions are modified to N6-acetyllysine; alternate: Lys-221 and Lys-228. N6-succinyllysine; alternate occurs at positions 221 and 228. A Phosphoserine modification is found at Ser-232. The urate site is built by Val-235, Gln-236, and Asn-262. His-264 serves as the catalytic Charge relay system. Residue Lys-278 is modified to N6-acetyllysine. A Phosphotyrosine modification is found at Tyr-289. Positions 302–304 match the Microbody targeting signal motif; the sequence is SRL.

The protein belongs to the uricase family.

The protein resides in the peroxisome. The enzyme catalyses urate + O2 + H2O = 5-hydroxyisourate + H2O2. The protein operates within purine metabolism; urate degradation; (S)-allantoin from urate: step 1/3. In terms of biological role, catalyzes the oxidation of uric acid to 5-hydroxyisourate, which is further processed to form (S)-allantoin. This is Uricase (UOX) from Macaca fascicularis (Crab-eating macaque).